Reading from the N-terminus, the 85-residue chain is ATP synthase subunit c (85 aa).

2 consecutive transmembrane segments (helical) span residues 20–40 (LGAG…GNIF) and 65–85 (FALT…ILFA).

The protein belongs to the ATPase C chain family. In terms of assembly, F-type ATPases have 2 components, F(1) - the catalytic core - and F(0) - the membrane proton channel. F(1) has five subunits: alpha(3), beta(3), gamma(1), delta(1), epsilon(1). F(0) has three main subunits: a(1), b(2) and c(10-14). The alpha and beta chains form an alternating ring which encloses part of the gamma chain. F(1) is attached to F(0) by a central stalk formed by the gamma and epsilon chains, while a peripheral stalk is formed by the delta and b chains.

It localises to the cell inner membrane. Its function is as follows. F(1)F(0) ATP synthase produces ATP from ADP in the presence of a proton or sodium gradient. F-type ATPases consist of two structural domains, F(1) containing the extramembraneous catalytic core and F(0) containing the membrane proton channel, linked together by a central stalk and a peripheral stalk. During catalysis, ATP synthesis in the catalytic domain of F(1) is coupled via a rotary mechanism of the central stalk subunits to proton translocation. Key component of the F(0) channel; it plays a direct role in translocation across the membrane. A homomeric c-ring of between 10-14 subunits forms the central stalk rotor element with the F(1) delta and epsilon subunits. This Gluconobacter oxydans (strain 621H) (Gluconobacter suboxydans) protein is ATP synthase subunit c.